A 273-amino-acid polypeptide reads, in one-letter code: Glutamate racemase (273 aa).

Residues aspartate 11–serine 12 and tyrosine 43–glycine 44 contribute to the substrate site. Cysteine 74 (proton donor/acceptor) is an active-site residue. Position 75–76 (asparagine 75–threonine 76) interacts with substrate. The active-site Proton donor/acceptor is cysteine 185. A substrate-binding site is contributed by threonine 186–histidine 187.

The protein belongs to the aspartate/glutamate racemases family.

The enzyme catalyses L-glutamate = D-glutamate. The protein operates within cell wall biogenesis; peptidoglycan biosynthesis. Its function is as follows. Provides the (R)-glutamate required for cell wall biosynthesis. The protein is Glutamate racemase of Lactiplantibacillus plantarum (strain ATCC BAA-793 / NCIMB 8826 / WCFS1) (Lactobacillus plantarum).